Here is a 756-residue protein sequence, read N- to C-terminus: Polyribonucleotide nucleotidyltransferase (756 aa).

Residues D527 and D533 each contribute to the Mg(2+) site. One can recognise a KH domain in the interval 593 to 652 (PRITTIKVPVDKIGEVIGPKGKMINSITEETGASISIEDDGTVFVGASNGEAAQAAIDKI). One can recognise an S1 motif domain in the interval 664–733 (GERFLGTVVK…NRGKISLVLV (70 aa)).

It belongs to the polyribonucleotide nucleotidyltransferase family. The cofactor is Mg(2+).

It localises to the cytoplasm. The enzyme catalyses RNA(n+1) + phosphate = RNA(n) + a ribonucleoside 5'-diphosphate. Involved in mRNA degradation. Catalyzes the phosphorolysis of single-stranded polyribonucleotides processively in the 3'- to 5'-direction. This Mycolicibacterium gilvum (strain PYR-GCK) (Mycobacterium gilvum (strain PYR-GCK)) protein is Polyribonucleotide nucleotidyltransferase.